Here is a 341-residue protein sequence, read N- to C-terminus: Biotin synthase (341 aa).

One can recognise a Radical SAM core domain in the interval 40–267; the sequence is AEIQVSTLLS…RSMVRLSAGR (228 aa). Residues cysteine 55, cysteine 59, and cysteine 62 each coordinate [4Fe-4S] cluster. [2Fe-2S] cluster contacts are provided by cysteine 99, cysteine 130, cysteine 190, and arginine 262.

Belongs to the radical SAM superfamily. Biotin synthase family. As to quaternary structure, homodimer. It depends on [4Fe-4S] cluster as a cofactor. Requires [2Fe-2S] cluster as cofactor.

The catalysed reaction is (4R,5S)-dethiobiotin + (sulfur carrier)-SH + 2 reduced [2Fe-2S]-[ferredoxin] + 2 S-adenosyl-L-methionine = (sulfur carrier)-H + biotin + 2 5'-deoxyadenosine + 2 L-methionine + 2 oxidized [2Fe-2S]-[ferredoxin]. It functions in the pathway cofactor biosynthesis; biotin biosynthesis; biotin from 7,8-diaminononanoate: step 2/2. Its function is as follows. Catalyzes the conversion of dethiobiotin (DTB) to biotin by the insertion of a sulfur atom into dethiobiotin via a radical-based mechanism. In Xylella fastidiosa (strain M12), this protein is Biotin synthase.